We begin with the raw amino-acid sequence, 387 residues long: Early growth response protein 3 (387 aa).

The segment at 241–283 (PGFGSLPQPPLTLKPIRPRKYPNRPSKTPLHERPHACPAEGCD) is disordered. Residues 269 to 283 (PLHERPHACPAEGCD) are compositionally biased toward basic and acidic residues. 3 consecutive C2H2-type zinc fingers follow at residues 275 to 299 (HACP…LRIH), 305 to 327 (FQCR…IRTH), and 333 to 355 (FACE…AKIH). Residues 348–387 (RKRHAKIHLKQKEKKSEKGGAPSASSAPTVSLAPVVTTCA) form a disordered region. The segment covering 350-360 (RHAKIHLKQKE) has biased composition (basic residues).

The protein belongs to the EGR C2H2-type zinc-finger protein family.

Its subcellular location is the nucleus. Functionally, probable transcription factor involved in muscle spindle development. This is Early growth response protein 3 (Egr3) from Mus musculus (Mouse).